The sequence spans 215 residues: Adenylate kinase (215 aa).

Residue 10–15 coordinates ATP; it reads GAGKGT. Residues 30–59 are NMP; that stretch reads STGDMLRAAVKAGSPLGQQVKGVMDSGGLV. Residues T31, R36, 57–59, 85–88, and Q92 each bind AMP; these read GLV and GFPR. The interval 122–159 is LID; the sequence is GRRVHPASGRVYHTEHNPPKVAGKDDVTGEELIQREDD. ATP is bound by residues R123 and 132 to 133; that span reads VY. AMP contacts are provided by R156 and R167. G201 contributes to the ATP binding site.

Belongs to the adenylate kinase family. In terms of assembly, monomer.

The protein localises to the cytoplasm. The catalysed reaction is AMP + ATP = 2 ADP. The protein operates within purine metabolism; AMP biosynthesis via salvage pathway; AMP from ADP: step 1/1. Functionally, catalyzes the reversible transfer of the terminal phosphate group between ATP and AMP. Plays an important role in cellular energy homeostasis and in adenine nucleotide metabolism. The chain is Adenylate kinase from Pseudomonas aeruginosa (strain LESB58).